The primary structure comprises 583 residues: Lamin-B3 (583 aa).

The tract at residues 1-30 (MATSTPSRAREHASAAQSPGSPTRISRMQE) is disordered. The head stretch occupies residues 2–32 (ATSTPSRAREHASAAQSPGSPTRISRMQEKE). The segment covering 15–26 (AAQSPGSPTRIS) has biased composition (polar residues). At Ser21 the chain carries Phosphoserine. One can recognise an IF rod domain in the interval 30–386 (EKEDLRHLND…KMLEGEEQRL (357 aa)). The tract at residues 33-67 (DLRHLNDRLAAYIERVRSLEADKSLLKIQLEEREE) is coil 1A. Residues 68-79 (VSSREVTNLRQL) form a linker 1 region. A coil 1B region spans residues 80-215 (YETELADARK…QKNIHTQEVK (136 aa)). The segment at 216 to 242 (EIKKRHDTRIVEIDSGRRVEFESKLAE) is linker 2. Residues 243–384 (ALQELRRDHE…YRKMLEGEEQ (142 aa)) are coil 2. The interval 383 to 431 (EQRLKLSPSPSQRSTVSRASTSQTSRLLRGKKRKLDETGRSVTKRSYKV) is disordered. Residues 385-580 (RLKLSPSPSQ…QSHQSVDPSC (196 aa)) are tail. Polar residues predominate over residues 390–408 (PSPSQRSTVSRASTSQTSR). Ser391 carries the phosphoserine modification. The 118-residue stretch at 429–546 (YKVVQQASST…EECAERTLYR (118 aa)) folds into the LTD domain. The residue at position 580 (Cys580) is a Cysteine methyl ester. Residue Cys580 is the site of S-farnesyl cysteine attachment. The propeptide at 581–583 (SIM) is removed in mature form.

The protein belongs to the intermediate filament family. Post-translationally, phosphorylation plays a key role in lamin organization, subcellular localization and nuclear envelope disintegration. Phosphorylation by CDK1 at Ser-21 at the onset of mitosis drives lamin disassembly and nuclear envelope breakdown.

It localises to the nucleus lamina. The protein resides in the nucleus envelope. Its subcellular location is the nucleus. The protein localises to the nucleoplasm. It is found in the nucleus matrix. Lamins are intermediate filament proteins that assemble into a filamentous meshwork, and which constitute the major components of the nuclear lamina, a fibrous layer on the nucleoplasmic side of the inner nuclear membrane. Lamins provide a framework for the nuclear envelope, bridging the nuclear envelope and chromatin, thereby playing an important role in nuclear assembly, chromatin organization, nuclear membrane and telomere dynamics. The structural integrity of the lamina is strictly controlled by the cell cycle, as seen by the disintegration and formation of the nuclear envelope in prophase and telophase, respectively. The sequence is that of Lamin-B3 (lmnb3.L) from Xenopus laevis (African clawed frog).